The primary structure comprises 634 residues: Chaperone protein HtpG (634 aa).

The a; substrate-binding stretch occupies residues 1–342; sequence MTVDTDKQTL…SADLSLNVSR (342 aa). Residues 343–559 form a b region; the sequence is EILQSGPVVD…QGDLGLQMRQ (217 aa). Residues 560-634 form a c region; sequence LLEASGQAVP…LNKLLLELSA (75 aa).

The protein belongs to the heat shock protein 90 family. Homodimer.

Its subcellular location is the cytoplasm. Its function is as follows. Molecular chaperone. Has ATPase activity. This chain is Chaperone protein HtpG, found in Xanthomonas campestris pv. campestris (strain 8004).